Reading from the N-terminus, the 1233-residue chain is Anion exchange protein 3 (1233 aa).

The segment covering 1 to 11 (MANGVIPPPGG) has biased composition (pro residues). 2 disordered regions span residues 1–320 (MANG…RRPH) and 431–500 (DDKD…DGHR). Residues 1-709 (MANGVIPPPG…DLRDALHSQC (709 aa)) lie on the Cytoplasmic side of the membrane. Residues 58–73 (DPEKPSRSFSERDFAF) show a composition bias toward basic and acidic residues. 2 stretches are compositionally biased toward basic residues: residues 74–97 (HRHI…KLRR) and 104–113 (RHTRRKRKKE). The span at 137–153 (GEEEEEEEEEGESETEA) shows a compositional bias: acidic residues. A phosphoserine mark is found at Ser-168, Ser-171, Ser-176, and Ser-199. A compositionally biased stretch (low complexity) spans 201–216 (QRSVSSSSPRARAPRV). The span at 268 to 290 (DDMKSHRLEDNPGVRRHLVKEPS) shows a compositional bias: basic and acidic residues. Arg-296 is subject to Omega-N-methylarginine. Residues 437–450 (SFPRNPSSSSVNSV) show a composition bias toward low complexity. The segment covering 482–500 (HDPDAKERPLHMPGGDGHR) has biased composition (basic and acidic residues). A run of 4 helical transmembrane segments spans residues 710-732 (VAAV…GLLG), 738-775 (LMGV…LLVF), 795-817 (VWVG…TFLV), and 827-848 (IFAF…YKVF). Positions 710–1233 (VAAVLFIYFA…DEYNELHMPV (524 aa)) are membrane (anion exchange). N-linked (GlcNAc...) asparagine glycosylation is present at Asn-874. A helical transmembrane segment spans residues 894–911 (ALLSLILMLGTFLIAFFL). At 912–926 (RKFRNSRFLGGKARR) the chain is on the cytoplasmic side. Transmembrane regions (helical) follow at residues 927–947 (IIGD…DYSI), 981–1003 (PFPP…LIFM), 1029–1050 (LLLI…LTAA), 1084–1129 (VTGV…IQLS), and 1156–1192 (MHLF…TVPL). Cys-1166 is lipidated: S-palmitoyl cysteine.

Belongs to the anion exchanger (TC 2.A.31) family.

It is found in the cell membrane. The catalysed reaction is hydrogencarbonate(in) + chloride(out) = hydrogencarbonate(out) + chloride(in). Functionally, sodium-independent anion exchanger which mediates the electroneutral exchange of chloride for bicarbonate ions across the cell membrane. May be involved in the regulation of intracellular pH, and the modulation of cardiac action potential. This is Anion exchange protein 3 (SLC4A3) from Oryctolagus cuniculus (Rabbit).